A 245-amino-acid chain; its full sequence is Thioredoxin-like 1-2, chloroplastic (245 aa).

The transit peptide at 1 to 92 (MDAISSLGTN…TNHNMLEIQS (92 aa)) directs the protein to the chloroplast. The Thioredoxin domain occupies 93-194 (ANHLVDSLLN…FKKALDKHGS (102 aa)). Catalysis depends on nucleophile residues Cys117 and Cys120. Cys117 and Cys120 are disulfide-bonded.

This sequence belongs to the thioredoxin family.

The protein localises to the plastid. It localises to the chloroplast. Probable thiol-disulfide oxidoreductase that may participate in various redox reactions. The sequence is that of Thioredoxin-like 1-2, chloroplastic from Arabidopsis thaliana (Mouse-ear cress).